We begin with the raw amino-acid sequence, 729 residues long: MDDSTHAAEAVIATPAGNRTVRFETGRLARQAAGSAVAYLGDTMVLSATTVSKQPKEQLDFFPLTVDVEERMYAAGRIPGSFFRREGRPSEDAILTCRLIDRPLRPSFAKGLRNEIQVVATVLALDPDTLYDVVAINAASASTTLSGLPFTGPIGATRVGYVDGEWIAFPTHAELARATFDMVVAGRVVEDGSDVAIMMVEAEATPGTVELIAGGAPAPTEEVVAAGLEAAKPAIRELCRAQSELASLAGKAATREFPVFIDHHDDVLEALSAAVGDELSAALRIAGKSERENELDRVRQLAAEKVAAQFEGREKEIGAAYRALTKKLVRSRIVTEGVRIDGRSTTEIRELSAEVDYIPRVHGSALFERGETQILGVTTLAMLRMEQTVDTLNPDRTKRYMHNYNFPPYSTGETGRVGSPKRREIGHGALAERALLPVLPSREEFPYAIRQVSEALGSNGSTSMGSVCASTLSLLNAGVPLKAPVAGIAMGLVHADDAYVTLTDILGAEDAYGDMDFKVAGTRDFVTALQLDTKLDGIPASVLASALQQARGARLAILDVMAEAIGSPDEMSAHAPRVISVKIPVDKIGEVIGPKGKMINQIQADSGAEITVEDDGTIYIGAADGTSAETARSAINAIANPQMPEVGERYLGTIVKITNFGAFVSLTPGRDGLLHVSKLKTLSGGKRVEKVEDVLTVGQKLQVEITEIDARGKISLSPSAEAADAAAAS.

2 residues coordinate Mg(2+): Asp-510 and Asp-516. The KH domain occupies 576 to 635 (PRVISVKIPVDKIGEVIGPKGKMINQIQADSGAEITVEDDGTIYIGAADGTSAETARSAI). Positions 647–719 (GERYLGTIVK…ARGKISLSPS (73 aa)) constitute an S1 motif domain.

This sequence belongs to the polyribonucleotide nucleotidyltransferase family. The cofactor is Mg(2+).

It localises to the cytoplasm. It carries out the reaction RNA(n+1) + phosphate = RNA(n) + a ribonucleoside 5'-diphosphate. In terms of biological role, involved in mRNA degradation. Catalyzes the phosphorolysis of single-stranded polyribonucleotides processively in the 3'- to 5'-direction. The sequence is that of Polyribonucleotide nucleotidyltransferase from Frankia alni (strain DSM 45986 / CECT 9034 / ACN14a).